A 191-amino-acid chain; its full sequence is FMN reductase (NADH) RutF (191 aa).

Belongs to the non-flavoprotein flavin reductase family. RutF subfamily.

It catalyses the reaction FMNH2 + NAD(+) = FMN + NADH + 2 H(+). Catalyzes the reduction of FMN to FMNH2 which is used to reduce pyrimidine by RutA via the Rut pathway. The sequence is that of FMN reductase (NADH) RutF from Escherichia coli O1:K1 / APEC.